A 212-amino-acid polypeptide reads, in one-letter code: Large ribosomal subunit protein uL3 (212 aa).

Residues 135-161 (MTHGNSLSHRAPGSIGQNQSPGKVFKG) form a disordered region. Gln-153 bears the N5-methylglutamine mark.

The protein belongs to the universal ribosomal protein uL3 family. As to quaternary structure, part of the 50S ribosomal subunit. Forms a cluster with proteins L14 and L19. Methylated by PrmB.

Its function is as follows. One of the primary rRNA binding proteins, it binds directly near the 3'-end of the 23S rRNA, where it nucleates assembly of the 50S subunit. This is Large ribosomal subunit protein uL3 from Alteromonas mediterranea (strain DSM 17117 / CIP 110805 / LMG 28347 / Deep ecotype).